We begin with the raw amino-acid sequence, 267 residues long: 22 kDa alpha-zein 14 (267 aa).

A signal peptide spans 1–21; it reads MATKILSLLALLALFASATNA.

It belongs to the zein family.

Zeins are major seed storage proteins. The chain is 22 kDa alpha-zein 14 from Zea mays (Maize).